A 1416-amino-acid polypeptide reads, in one-letter code: MDFYSTSFTIPRSIGASSFVTETTNPNGSITAASSSSFSLEAPRPGSHVGARTAPTASAAPEPPASSLPGRFTSMRSRFPPSVKAFMPSAFGGKRTSDRIVEAVGAEKAEADAATGSSSQPVKAEPEQSAPLAPIGERGNARPSKLVNPSLANMDDNGSSQHRDSRSTVGTRSSFDISSAASFTADSTAASSAIGVNSSSTTHSASNSISANHVQQDRGISLSQSSKDLQEAIQKLSSDIMANHQCLVSFASVPQNDESRMPPTPLSHPFARQSSFSSLQSLDQLPFPNPNGSSGYPYQQYHPQPIGTPDSHSSAFFPGRAAGEALGSGFPGLNSSSLSLSSLNPPASGSHVAQEVGLSSAQPLRSPQPNAIGASRASLSSMPKPPQYNFHLSGGYQQVMNARGTILRENPFKSTSSIKVPRADVFDVAPASSPPAKESIKEDVRRKLDEVQTATGATITLKNSEVRGADLGYGLETERIVEVLVSGTFESVELARVKVLVILDEIAGLRSETCEIDYKLHNIIGGRKRCVVQKIEEETGTSIYLPSSFLGTFGSSLASRNDGKAVAAHQNQIHITGEFFGVQRARDMLFQVSMHKSKGIISRDAAILPRKLDWMLTDRLEELRSIMIDNGTFVAFPLLGSQTSVISVFGDHRVNIERTIRSIMQLACQFYVASLWLLPVGFDVYMPSPQANLNPTQVAPMLKHVANASGAEVVFKSNCFEIHGLESEVRTAVSALLELELIKSFNFEVRFQIELANEHREFISGKKNGKVNKVMKQCGVRIKFETFNDYNFLIDVSGNDRNGVLQGLGLLQEELPAEMSFHVPEAYHKRIIGVGGKNIQRIMKKFGVYVKFSNAEEFAALGGYLDNEDNVIARTPAKNAANLENLKLSVMELVNPKDKDYISETVTISRRYHRTLLGEKAIFIHDIESKTSSSVRFPARESASDLVTIFGPESQIHIAAQMLLDHVPFEAEFRAPNSTELGDAIHSAEFAALAEQLKRDLSISVSPVIEQRRPGGEAVFKLRLNRSNTDFLPTAKDAIEDFLINRNANIYAAPSRTRSDSFASAFPHFANKLISTAGAAESNESFNTAAAAAAAAAEQARVNERRLRAAASTPDIKALFDAPSQHLHGGPGFASSNGGSAATAANSPLITSPLYTSPYGNGRGFGSDVWGAPTRAFTASNASNATPSLMGLPPPSVGTPGAGLVSAAGPGPIGAGVSVPTSGGIQFPSQPSLHQQSGHRLSDEMHMNRGLEGMSMEDRVKALRKPRSFAHRAQSLDIGAMAAQQASQHASGSMSVGPSTPYGLGPIGTGAPGMSGHFPGMTSSQGTFGGGAPHHLYQPPTPQQQAQQQLQYQQQQQQQQQQQQQPGYGMPHQPQHFHASSASISRLPPGRNTQNPDSTTMDEVSRVLAQLAFDRA.

Disordered stretches follow at residues 25-76, 108-174, 196-225, 255-320, and 341-385; these read NPNG…TSMR, KAEA…TRSS, VNSS…LSQS, QNDE…FPGR, and SSLN…MPKP. Composition is skewed to low complexity over residues 196 to 213, 273 to 285, and 341 to 350; these read VNSS…SANH, QSSF…LDQL, and SSLNPPASGS. Polar residues predominate over residues 357–369; sequence GLSSAQPLRSPQP. 5 KH domains span residues 412-504, 508-594, 747-816, 817-892, and 900-968; these read FKST…VILD, GLRS…QVSM, FEVR…EELP, AEMS…SVME, and DYIS…DHVP. Disordered regions lie at residues 1215–1240 and 1289–1416; these read AGVS…SGHR and HASG…FDRA. Residues 1219-1239 are compositionally biased toward polar residues; it reads VPTSGGIQFPSQPSLHQQSGH. Positions 1343–1374 are enriched in low complexity; that stretch reads QQQAQQQLQYQQQQQQQQQQQQQPGYGMPHQP. Residues 1391–1402 are compositionally biased toward polar residues; that stretch reads RNTQNPDSTTMD.

Functionally, RNA-binding protein that recognizes the sequence AUACCC via its tandem KH domains 3 and 4, probably in order to promote mRNA instability. Plays an essential role in filamentous growth and virulence. The protein is K homology domain-containing protein 4 of Mycosarcoma maydis (Corn smut fungus).